Reading from the N-terminus, the 200-residue chain is TATA-box-binding protein (200 aa).

2 repeat units span residues 25–101 (LQNI…ARII) and 115–192 (IQNI…YPVL).

The protein belongs to the TBP family. In terms of assembly, belongs to the TFIID complex together with the TBP-associated factors (TAFs). Binds DNA as monomer.

It is found in the nucleus. General transcription factor that functions at the core of the DNA-binding multiprotein factor TFIID. Binding of TFIID to the TATA box is the initial transcriptional step of the pre-initiation complex (PIC), playing a role in the activation of eukaryotic genes transcribed by RNA polymerase II. The chain is TATA-box-binding protein from Nicotiana tabacum (Common tobacco).